The primary structure comprises 397 residues: uncharacterized protein (397 aa).

Disordered regions lie at residues 159–203 and 221–397; these read LNSS…KSTI and NSVK…KTKN. Low complexity predominate over residues 221–240; sequence NSVKSSPSKSFVSISSPVQS. Polar residues-rich tracts occupy residues 285–309 and 320–330; these read TSTLDASSSNTSLASTGPMTVSSST and VNPNSTSSVTF. A DNA-binding region (zn(2)-C6 fungal-type) is located at residues 342–371; that stretch reads CSRCKKSKKGCDRQRPCGRCRDAGLNSEDC. The span at 350 to 363 shows a compositional bias: basic and acidic residues; that stretch reads KGCDRQRPCGRCRD. The segment covering 383–397 has biased composition (basic residues); sequence RKPRGRGRGRPKTKN.

It localises to the nucleus. This is an uncharacterized protein from Schizosaccharomyces pombe (strain 972 / ATCC 24843) (Fission yeast).